The chain runs to 502 residues: Glycerol kinase (502 aa).

Threonine 14 lines the ADP pocket. Residues threonine 14, threonine 15, and serine 16 each contribute to the ATP site. Threonine 14 provides a ligand contact to sn-glycerol 3-phosphate. Arginine 18 is a binding site for ADP. The sn-glycerol 3-phosphate site is built by arginine 84, glutamate 85, and tyrosine 136. The glycerol site is built by arginine 84, glutamate 85, and tyrosine 136. Histidine 232 carries the post-translational modification Phosphohistidine; by HPr. Aspartate 246 contacts sn-glycerol 3-phosphate. Residues aspartate 246 and glutamine 247 each coordinate glycerol. 2 residues coordinate ADP: threonine 268 and glycine 311. ATP contacts are provided by threonine 268, glycine 311, glutamine 315, and glycine 412. The ADP site is built by glycine 412 and asparagine 416.

Belongs to the FGGY kinase family. As to quaternary structure, homotetramer and homodimer (in equilibrium). The phosphoenolpyruvate-dependent sugar phosphotransferase system (PTS), including enzyme I, and histidine-containing protein (HPr) are required for the phosphorylation, which leads to the activation of the enzyme.

The catalysed reaction is glycerol + ATP = sn-glycerol 3-phosphate + ADP + H(+). Its pathway is polyol metabolism; glycerol degradation via glycerol kinase pathway; sn-glycerol 3-phosphate from glycerol: step 1/1. Its activity is regulated as follows. Activated by phosphorylation and inhibited by fructose 1,6-bisphosphate (FBP). Key enzyme in the regulation of glycerol uptake and metabolism. Catalyzes the phosphorylation of glycerol to yield sn-glycerol 3-phosphate. This Streptococcus gordonii (strain Challis / ATCC 35105 / BCRC 15272 / CH1 / DL1 / V288) protein is Glycerol kinase.